The chain runs to 199 residues: Transgelin-2 (199 aa).

Ala-2 is modified (N-acetylalanine). Position 11 is a phosphoserine (Ser-11). 2 positions are modified to N6-acetyllysine: Lys-17 and Lys-20. Residues 24-136 form the Calponin-homology (CH) domain; sequence ADLEQILIQW…RTLMNLGGLA (113 aa). The residue at position 163 (Ser-163) is a Phosphoserine. Residue Lys-171 forms a Glycyl lysine isopeptide (Lys-Gly) (interchain with G-Cter in SUMO2) linkage. The Calponin-like repeat unit spans residues 174–199; that stretch reads IGLQMGTNRGASQAGMTGYGMPRQIL. Residue Thr-180 is modified to Phosphothreonine. 2 positions are modified to omega-N-methylarginine: Arg-182 and Arg-196.

Belongs to the calponin family.

In Mus musculus (Mouse), this protein is Transgelin-2 (Tagln2).